Here is a 282-residue protein sequence, read N- to C-terminus: uncharacterized protein (282 aa).

The 136-residue stretch at 5–140 folds into the N-acetyltransferase domain; sequence DELIKLHEEH…SFQPYTKKLD (136 aa).

The protein belongs to the acetyltransferase family.

This is an uncharacterized protein from Bacillus subtilis (strain 168).